The sequence spans 408 residues: Retron Ec48 reverse transcriptase (408 aa).

In terms of domain architecture, Reverse transcriptase spans 43–269 (EELKAIAELP…EPIKVHGLRV (227 aa)). 3 residues coordinate Mg(2+): Asp-137, Asp-216, and Asp-217.

This sequence belongs to the bacterial reverse transcriptase family.

The catalysed reaction is DNA(n) + a 2'-deoxyribonucleoside 5'-triphosphate = DNA(n+1) + diphosphate. Functionally, reverse transcriptase (RT) component of antiviral defense system retron Ec48, composed of a non-coding RNA (ncRNA), this reverse transcriptase (RT) and the following membrane protein. Expression of this retron confers protection against bacteriophages lambda, T2, T4, T5 and T7. At multiplicity of infection (MOI) of 0.02 cultures grow normally when infected with lambda without collapsing, at MOI 2 cultures enter growth stasis. At MOI 3 cell membranes are permeabilized within 15 minutes of infection but do not lyse, suggesting the phage are not able to finish a replication cycle. Antiviral defense is suppressed by mutations that knockout the lambda gam expression or phage T7 gp5.9 expression; both viral genes inhibit host RecBCD. The Ec48 retron may sense the integrity of the RecBCD enzyme; when RecBCD is perturbed by viral proteins the Ec48 effector (the membrane protein) is activated, leading to abortive infection and bacterial growth arrest. Responsible for synthesis of msDNA-Ec48 (a branched molecule with RNA linked by a 2',5'-phosphodiester bond to ssDNA). The retron transcript serves as primer (from a conserved internal G residue) and template for the reaction, and codes for the RT. The protein is Retron Ec48 reverse transcriptase of Escherichia coli.